Here is a 402-residue protein sequence, read N- to C-terminus: Protein rds1 (402 aa).

Its function is as follows. May have a function in stress-related responses of the cell. The protein is Protein rds1 (rds1) of Schizosaccharomyces pombe (strain 972 / ATCC 24843) (Fission yeast).